A 369-amino-acid polypeptide reads, in one-letter code: Histone deacetylase-like amidohydrolase (369 aa).

His-143 (proton donor/acceptor) is an active-site residue. Asp-180, His-182, and Asp-268 together coordinate Zn(2+).

Belongs to the histone deacetylase family. Homotetramer; dimer of dimers. Requires Zn(2+) as cofactor.

Its activity is regulated as follows. Zinc, and cobalt and nickel at a lesser extent, are able to increase the catalytic activity (2.2-, 1.3- and 1.1-fold respectively) at concentrations of 1 mM. Higher concentrations have an inhibitory effect. Magnesium, manganese and calcium have no effect on activity at concentrations between 0 and 10 mM. At 100 mM, the catalytic activity is increased between 1.2- and 2.1-fold. Hydroxamates like TSA and SAHA inhibit the enzyme. Is also inhibited by azobenzenes, stilbenes and arylazopyrazoles. In terms of biological role, exhibits significant levels of protein deacetylase activity comparable to those of eukaryotic HDACs in assays both with fluorogenic peptidic substrates and acetate-radiolabeled histones. Accepts proteins with epsilon-acetylated lysine residues and tritiated-acetate-prelabeled chicken histones as substrates. The natural substrate protein is not yet known. This chain is Histone deacetylase-like amidohydrolase (hdaH), found in Alcaligenes sp. (strain DSM 11172) (Bordetella sp. (strain FB188)).